Reading from the N-terminus, the 334-residue chain is Adenine deaminase (334 aa).

3 residues coordinate Zn(2+): histidine 17, histidine 19, and histidine 197. The Proton donor role is filled by glutamate 200. Residue aspartate 278 coordinates Zn(2+). Residue aspartate 279 participates in substrate binding.

Belongs to the metallo-dependent hydrolases superfamily. Adenosine and AMP deaminases family. Adenine deaminase type 2 subfamily. It depends on Zn(2+) as a cofactor.

The enzyme catalyses adenine + H2O + H(+) = hypoxanthine + NH4(+). In terms of biological role, catalyzes the hydrolytic deamination of adenine to hypoxanthine. Plays an important role in the purine salvage pathway and in nitrogen catabolism. This Rhodospirillum rubrum (strain ATCC 11170 / ATH 1.1.1 / DSM 467 / LMG 4362 / NCIMB 8255 / S1) protein is Adenine deaminase.